We begin with the raw amino-acid sequence, 559 residues long: Heterochromatin protein 1-binding protein 3 (559 aa).

The tract at residues 1 to 132 (MATDLSEAEP…SKEKEKKVKK (132 aa)) is disordered. 2 stretches are compositionally biased toward basic and acidic residues: residues 51 to 68 (TPPK…KADA) and 96 to 128 (EQPK…EKEK). 3 H15 domains span residues 158 to 233 (SRPK…VVVS), 256 to 331 (QQVK…QLKK), and 339 to 414 (GGTL…QLCF). The PxVxL motif motif lies at 256–260 (QQVKL). The disordered stretch occupies residues 421-559 (DVLYPEKQQD…AMRKSLRAKK (139 aa)). The segment covering 429-459 (QDEDSEESQEEEEEESEEEEESEEEESEEEE) has biased composition (acidic residues). A compositionally biased stretch (basic residues) spans 463 to 515 (KKRMQKRPPPKSRSRAPPMKRRESKPKPRKTPAAHQGKAKPPPKVKTPVKKAK). Positions 516-533 (PAAPAIKKPSGGSSSKKP) are enriched in low complexity. Residues 549–559 (SAMRKSLRAKK) show a composition bias toward basic residues.

It is found in the nucleus. The protein localises to the chromosome. Functionally, component of heterochromatin that maintains heterochromatin integrity during G1/S progression and regulates the duration of G1 phase to critically influence cell proliferative capacity. The protein is Heterochromatin protein 1-binding protein 3 (HP1BP3) of Gallus gallus (Chicken).